Reading from the N-terminus, the 333-residue chain is Low specificity L-threonine aldolase (333 aa).

Lysine 197 carries the N6-(pyridoxal phosphate)lysine modification.

It belongs to the threonine aldolase family. Homotetramer. It depends on pyridoxal 5'-phosphate as a cofactor.

The catalysed reaction is L-threonine = acetaldehyde + glycine. It catalyses the reaction L-allo-threonine = acetaldehyde + glycine. Its function is as follows. Catalyzes the cleavage of L-allo-threonine and L-threonine to glycine and acetaldehyde. L-threo-phenylserine and L-erythro-phenylserine are also good substrates. This is Low specificity L-threonine aldolase (ltaE) from Escherichia coli (strain K12).